The chain runs to 586 residues: Pyruvate kinase (586 aa).

A substrate-binding site is contributed by arginine 32. Residues asparagine 34, serine 36, aspartate 66, and threonine 67 each contribute to the K(+) site. 34–37 (NFSH) lines the ATP pocket. 2 residues coordinate ATP: arginine 73 and lysine 156. Mg(2+) is bound at residue glutamate 222. Residues glycine 245, aspartate 246, and threonine 278 each coordinate substrate. A Mg(2+)-binding site is contributed by aspartate 246.

Belongs to the pyruvate kinase family. It in the C-terminal section; belongs to the PEP-utilizing enzyme family. It depends on Mg(2+) as a cofactor. The cofactor is K(+).

It carries out the reaction pyruvate + ATP = phosphoenolpyruvate + ADP + H(+). The protein operates within carbohydrate degradation; glycolysis; pyruvate from D-glyceraldehyde 3-phosphate: step 5/5. The protein is Pyruvate kinase (pyk) of Staphylococcus saprophyticus subsp. saprophyticus (strain ATCC 15305 / DSM 20229 / NCIMB 8711 / NCTC 7292 / S-41).